The primary structure comprises 239 residues: MGQKINPLGFRLGTTQKHHSFWFAQPKNYSEGLQEDKKIRNCIKNYIQKNRKKGSNRKIESDSSSEVITHNRKTDSGSSSEVITRIEIQKEIDTIHVIIHIGFPNLLKKKGAIEELEKDLQKEIHSVNQRLNISIEKVKEPYREPNILAEYIAFQLKNRVSFRKAMKKAIELTKKADIRGVKVKIAGRLGGKEIARAECIKKGRLPLQTIRAKIDYCCYPIRTIYGVLGVKIWIFVDEE.

A KH type-2 domain is found at 43-139; the sequence is IKNYIQKNRK…RLNISIEKVK (97 aa). The interval 50-80 is disordered; sequence NRKKGSNRKIESDSSSEVITHNRKTDSGSSS.

The protein belongs to the universal ribosomal protein uS3 family. In terms of assembly, part of the 30S ribosomal subunit.

Its subcellular location is the plastid. The protein localises to the chloroplast. This is Small ribosomal subunit protein uS3c (rps3) from Agrostis stolonifera (Creeping bentgrass).